A 468-amino-acid polypeptide reads, in one-letter code: Zinc finger protein 672 (468 aa).

C2H2-type zinc fingers lie at residues 15–37 (YSCSVCGKSFQYSAVLLRHERAH), 43–65 (FCCLECGERCARAADLRAHRWTH), 71–93 (YICSECGQSFSHSGLLDLHLGTH), and 100–123 (RPCRLCGRRFPHVPALLLHRARQH). Residues 129–151 (HRCPLCARSFRQSALPFHLARAH) form a C2H2-type 5; degenerate zinc finger. 9 consecutive C2H2-type zinc fingers follow at residues 167 to 189 (YHCTQCPRAFHSSAGLRNHSRIH), 202 to 224 (HLCGICGKSFSKSSTLTRHLQRH), 230 to 252 (FKCPECGKGFLESATLVRHQRTH), 258 to 280 (YACSDCGRCFSESSTLLRHQRSH), 286 to 308 (HVCATCGKGFGQRYDLVVHQRSH), 314 to 336 (FPCPQCGRGFTDRSDLTKHLRTH), 342 to 364 (YHCELCGKRFTCISNLNVHLRNH), 370 to 392 (HKCPECGKSFSVASKLALHRKTH), and 398 to 420 (AECTECGKFFSHGRSLSQHQRSH).

This sequence belongs to the krueppel C2H2-type zinc-finger protein family.

It localises to the nucleus. In terms of biological role, may be involved in transcriptional regulation. This is Zinc finger protein 672 (Znf672) from Mus musculus (Mouse).